A 357-amino-acid polypeptide reads, in one-letter code: MKNTKTSQEQVIELKLSDRQKKVLKSIVDEYTISATPVSSKLLVQKEFKDQSSATIRNEMMFLEKNGLIEKQHISGGRVPSLKGYDFYNKNLINKNNNVSDNFKMRLHKILSKRYSNIDEILNAAVSIINETTQLPAVVTKTSSDELLKRIDLVKINDNSALVLIVTSSENILTHSIKLDKNTKFNDLQTCFSVLDERLVDTKLSLISSKLDLIVDIVRNKLEEVEYYFSKIVHRVFDFYAYKPNIDSKTYGVKYLTKHSEFEDQQKLNDLLNLLEDSTIWQQIALNKKTDGLAKIMLGNEIGHEHLAIATTQINLANTNHQITVVGPTRMDYAKIKALLDFLKIEIEKILGSTNEH.

Belongs to the HrcA family.

In terms of biological role, negative regulator of class I heat shock genes (grpE-dnaK-dnaJ and groELS operons). Prevents heat-shock induction of these operons. The chain is Heat-inducible transcription repressor HrcA from Ureaplasma parvum serovar 3 (strain ATCC 27815 / 27 / NCTC 11736).